The following is a 232-amino-acid chain: Putative ABC transporter ATP-binding protein VNG_2317G (232 aa).

The 230-residue stretch at 2-231 (LSVRNLVHRY…GALPDAGVRP (230 aa)) folds into the ABC transporter domain. 34–41 (GANGSGKT) contributes to the ATP binding site.

It belongs to the ABC transporter superfamily.

It is found in the cell membrane. Its function is as follows. Probably part of an ABC transporter complex. Responsible for energy coupling to the transport system. The sequence is that of Putative ABC transporter ATP-binding protein VNG_2317G from Halobacterium salinarum (strain ATCC 700922 / JCM 11081 / NRC-1) (Halobacterium halobium).